The chain runs to 155 residues: Probable calcium-binding protein CML9 (155 aa).

3 consecutive EF-hand domains span residues 8-43 (EQVD…LGQN), 86-121 (ATEK…HGDR), and 122-155 (LTEE…MNNK). Ca(2+) contacts are provided by D21, D23, D25, R27, and E32.

In terms of biological role, potential calcium sensor. This is Probable calcium-binding protein CML9 (CML9) from Oryza sativa subsp. japonica (Rice).